The primary structure comprises 373 residues: 3 beta-hydroxysteroid dehydrogenase/Delta 5--&gt;4-isomerase type 1 (373 aa).

NADP(+) is bound by residues 10–15 (GAGGFV), Tyr155, and Lys159. Lys159 functions as the Proton donor in the catalytic mechanism. Residues 288 to 308 (LPLLYWLAFLLETVSFLLRPV) form a helical membrane-spanning segment.

This sequence belongs to the 3-beta-HSD family. In terms of tissue distribution, steroidogenic tissues (includes testes, ovaries and adrenal glands).

Its subcellular location is the endoplasmic reticulum membrane. It is found in the mitochondrion membrane. The catalysed reaction is a 3beta-hydroxy-Delta(5)-steroid + NAD(+) = a 3-oxo-Delta(5)-steroid + NADH + H(+). It catalyses the reaction pregnenolone + NAD(+) = pregn-5-ene-3,20-dione + NADH + H(+). The enzyme catalyses 3beta-hydroxyandrost-5-en-17-one + NAD(+) = androst-5-ene-3,17-dione + NADH + H(+). It carries out the reaction androst-5-en-3beta,17beta-diol + NAD(+) = 17beta-hydroxy-androst-5-en-3-one + NADH + H(+). The catalysed reaction is a 3beta-hydroxysteroid + NADP(+) = a 3-oxosteroid + NADPH + H(+). It catalyses the reaction 5alpha-androstane-3beta,17beta-diol + NADP(+) = 17beta-hydroxy-5alpha-androstan-3-one + NADPH + H(+). The enzyme catalyses 3beta-hydroxy-5alpha-androstan-17-one + NADP(+) = 5alpha-androstan-3,17-dione + NADPH + H(+). It carries out the reaction a 3-oxo-Delta(5)-steroid = a 3-oxo-Delta(4)-steroid. The catalysed reaction is pregn-5-ene-3,20-dione = progesterone. It catalyses the reaction androst-5-ene-3,17-dione = androst-4-ene-3,17-dione. The enzyme catalyses 17beta-hydroxy-androst-5-en-3-one = testosterone. It carries out the reaction 5alpha-androstane-3beta,17beta-diol + NAD(+) = 17beta-hydroxy-5alpha-androstan-3-one + NADH + H(+). It functions in the pathway steroid hormone biosynthesis. It participates in steroid metabolism. In terms of biological role, a bifunctional enzyme responsible for the oxidation and isomerization of 3beta-hydroxy-Delta(5)-steroid precursors to 3-oxo-Delta(4)-steroids, an essential step in steroid hormone biosynthesis. Specifically catalyzes the conversion of pregnenolone to progesterone, 17alpha-hydroxypregnenolone to 17alpha-hydroxyprogesterone, dehydroepiandrosterone (DHEA) to 4-androstenedione, and androstenediol to testosterone. Additionally, catalyzes the interconversion between 3beta-hydroxy and 3-oxo-5alpha-androstane steroids controlling the bioavalability of the active forms. Specifically converts dihydrotestosterone to its inactive form 5alpha-androstanediol, that does not bind androgen receptor/AR. Also converts androstanedione, a precursor of testosterone and estrone, to epiandrosterone. Expected to use NAD(+) as preferred electron donor for the 3-beta-hydroxy-steroid dehydrogenase activity and NADPH for the 3-ketosteroid reductase activity. The chain is 3 beta-hydroxysteroid dehydrogenase/Delta 5--&gt;4-isomerase type 1 from Mus musculus (Mouse).